The primary structure comprises 190 residues: Shikimate kinase (190 aa).

19-24 (GSGKTT) is a binding site for ATP. Residue threonine 23 coordinates Mg(2+). Residues aspartate 41, arginine 65, and glycine 87 each coordinate substrate. Position 124 (arginine 124) interacts with ATP. Residue arginine 143 participates in substrate binding.

Belongs to the shikimate kinase family. Monomer. Requires Mg(2+) as cofactor.

The protein resides in the cytoplasm. It carries out the reaction shikimate + ATP = 3-phosphoshikimate + ADP + H(+). The protein operates within metabolic intermediate biosynthesis; chorismate biosynthesis; chorismate from D-erythrose 4-phosphate and phosphoenolpyruvate: step 5/7. In terms of biological role, catalyzes the specific phosphorylation of the 3-hydroxyl group of shikimic acid using ATP as a cosubstrate. This chain is Shikimate kinase, found in Synechococcus sp. (strain ATCC 27144 / PCC 6301 / SAUG 1402/1) (Anacystis nidulans).